The sequence spans 149 residues: Calmodulin-2 (149 aa).

EF-hand domains follow at residues 8-43 (DQISEFKEAFSLFDKDGDGCITTKELGTVMRSLGQN), 44-79 (PTEAELQDMINEVDADGNGTIDFPEFLNLMARKMKD), 81-116 (DSEEELKEAFRVFDKDQNGFISAAELRHVMTNLGEK), and 117-149 (LTDEEVDEMIKEADVDGDGQINYEEFVKVMMAK). Positions 21, 23, 25, 27, 32, 57, 59, 61, 63, 68, 94, 96, 98, 105, 130, 132, 134, 136, and 141 each coordinate Ca(2+).

This sequence belongs to the calmodulin family. Interacts with KCBP and CIP111. Binds to IQD1 and IQD20.

It localises to the cytoplasm. The protein resides in the cytoskeleton. In terms of biological role, calmodulin mediates the control of a large number of enzymes, ion channels and other proteins by Ca(2+). Among the enzymes to be stimulated by the calmodulin-Ca(2+) complex are a number of protein kinases and phosphatases. The chain is Calmodulin-2 (CAM2) from Arabidopsis thaliana (Mouse-ear cress).